Reading from the N-terminus, the 270-residue chain is Formamidopyrimidine-DNA glycosylase (270 aa).

Pro-2 functions as the Schiff-base intermediate with DNA in the catalytic mechanism. Glu-3 (proton donor) is an active-site residue. The Proton donor; for beta-elimination activity role is filled by Lys-58. Residues His-91, Arg-110, and Arg-151 each contribute to the DNA site. An FPG-type zinc finger spans residues 236-270 (LVYGRDGLPCPNCGRALKHATIGQRASVWCSHCQR). The Proton donor; for delta-elimination activity role is filled by Arg-260.

Belongs to the FPG family. Monomer. It depends on Zn(2+) as a cofactor.

The enzyme catalyses Hydrolysis of DNA containing ring-opened 7-methylguanine residues, releasing 2,6-diamino-4-hydroxy-5-(N-methyl)formamidopyrimidine.. It catalyses the reaction 2'-deoxyribonucleotide-(2'-deoxyribose 5'-phosphate)-2'-deoxyribonucleotide-DNA = a 3'-end 2'-deoxyribonucleotide-(2,3-dehydro-2,3-deoxyribose 5'-phosphate)-DNA + a 5'-end 5'-phospho-2'-deoxyribonucleoside-DNA + H(+). In terms of biological role, involved in base excision repair of DNA damaged by oxidation or by mutagenic agents. Acts as a DNA glycosylase that recognizes and removes damaged bases. Has a preference for oxidized purines, such as 7,8-dihydro-8-oxoguanine (8-oxoG). Has AP (apurinic/apyrimidinic) lyase activity and introduces nicks in the DNA strand. Cleaves the DNA backbone by beta-delta elimination to generate a single-strand break at the site of the removed base with both 3'- and 5'-phosphates. This is Formamidopyrimidine-DNA glycosylase from Stenotrophomonas maltophilia (strain K279a).